Reading from the N-terminus, the 484-residue chain is MKFKQDYFDQLSGFYSQVTPQGLPRPQWLAWSEDAAALIGLKQPDDELLQGLAGNQAIPGASYYAQVYSGHQFGGYSPQLGDGRSIILGEAEGPQGYWDVALKGAGMTPYSRHGDGRAVMRSAVREFLVSEALHHLNIPTTRALAVIGSDLPVWRETQETAAITVRLAKSHIRFGHFEFFCHSEQGSKDKLKQLLDFTLSQHYPELSRDQAGYIAWFNRVVADTAKLIAHWQAVGFAHGVMNTDNMSILGDSFDFGPFAFLDTFEEDFICNHSDPNGRYAFGQQPGVGLWNLQRLAQALVPIIASDDLIAALNTYQHHLVQAYLVLMRDKLGIKLVEPAGSERDEADLQLIGGFTLLMEANRLDHTNTWRRFAQLDPNSQHSSLRDDFIDLAGFDTWYQAYQERLGQVSDVAGWQAVRAQVNPKYVLRNYLAQEAIIACEEGNTQPLAELHQLLTRPFDEQPEKEAYAKRPPEWGQGLIMSCSS.

Glycine 81, glycine 83, arginine 84, lysine 103, aspartate 115, glycine 116, arginine 166, and arginine 173 together coordinate ATP. Aspartate 244 serves as the catalytic Proton acceptor. Positions 245 and 254 each coordinate Mg(2+). Aspartate 254 serves as a coordination point for ATP.

This sequence belongs to the SELO family. The cofactor is Mg(2+). It depends on Mn(2+) as a cofactor.

It carries out the reaction L-seryl-[protein] + ATP = 3-O-(5'-adenylyl)-L-seryl-[protein] + diphosphate. The catalysed reaction is L-threonyl-[protein] + ATP = 3-O-(5'-adenylyl)-L-threonyl-[protein] + diphosphate. The enzyme catalyses L-tyrosyl-[protein] + ATP = O-(5'-adenylyl)-L-tyrosyl-[protein] + diphosphate. It catalyses the reaction L-histidyl-[protein] + UTP = N(tele)-(5'-uridylyl)-L-histidyl-[protein] + diphosphate. It carries out the reaction L-seryl-[protein] + UTP = O-(5'-uridylyl)-L-seryl-[protein] + diphosphate. The catalysed reaction is L-tyrosyl-[protein] + UTP = O-(5'-uridylyl)-L-tyrosyl-[protein] + diphosphate. Functionally, nucleotidyltransferase involved in the post-translational modification of proteins. It can catalyze the addition of adenosine monophosphate (AMP) or uridine monophosphate (UMP) to a protein, resulting in modifications known as AMPylation and UMPylation. In Shewanella loihica (strain ATCC BAA-1088 / PV-4), this protein is Protein nucleotidyltransferase YdiU.